The following is a 126-amino-acid chain: Large ribosomal subunit protein bL12 (126 aa).

Belongs to the bacterial ribosomal protein bL12 family. As to quaternary structure, homodimer. Part of the ribosomal stalk of the 50S ribosomal subunit. Forms a multimeric L10(L12)X complex, where L10 forms an elongated spine to which 2 to 4 L12 dimers bind in a sequential fashion. Binds GTP-bound translation factors.

Forms part of the ribosomal stalk which helps the ribosome interact with GTP-bound translation factors. Is thus essential for accurate translation. This Blochmanniella floridana protein is Large ribosomal subunit protein bL12.